Here is a 344-residue protein sequence, read N- to C-terminus: Neurotrimin (344 aa).

A signal peptide spans 1–33; it reads MGVCGYLFLPWKCLVVVSLRLLFLVPTGVPVRS. 3 consecutive Ig-like C2-type domains span residues 39–126, 136–218, and 222–309; these read PKAM…PKTS, PKIV…VKVT, and PPYI…ASIM. Asparagine 44, asparagine 70, and asparagine 152 each carry an N-linked (GlcNAc...) asparagine glycan. A disulfide bridge links cysteine 57 with cysteine 115. 2 disulfides stabilise this stretch: cysteine 157–cysteine 201 and cysteine 243–cysteine 295. 3 N-linked (GlcNAc...) asparagine glycosylation sites follow: asparagine 284, asparagine 292, and asparagine 305. Residue asparagine 321 is the site of GPI-anchor amidated asparagine; alternate attachment. Residue asparagine 321 is glycosylated (N-linked (GlcNAc...) asparagine; alternate). Residues 322-344 constitute a propeptide, removed in mature form; it reads GTSRRAGCIWLLPLLVLHLLLKF.

The protein belongs to the immunoglobulin superfamily. IgLON family.

It localises to the cell membrane. Its function is as follows. Neural cell adhesion molecule. This chain is Neurotrimin (Ntm), found in Mus musculus (Mouse).